The primary structure comprises 568 residues: Sulfite reductase [NADPH] hemoprotein beta-component (568 aa).

Residues Cys-426, Cys-432, Cys-471, and Cys-475 each contribute to the [4Fe-4S] cluster site. Residue Cys-475 participates in siroheme binding.

The protein belongs to the nitrite and sulfite reductase 4Fe-4S domain family. As to quaternary structure, alpha(8)-beta(8). The alpha component is a flavoprotein, the beta component is a hemoprotein. The cofactor is siroheme. [4Fe-4S] cluster serves as cofactor.

It carries out the reaction hydrogen sulfide + 3 NADP(+) + 3 H2O = sulfite + 3 NADPH + 4 H(+). It functions in the pathway sulfur metabolism; hydrogen sulfide biosynthesis; hydrogen sulfide from sulfite (NADPH route): step 1/1. Functionally, component of the sulfite reductase complex that catalyzes the 6-electron reduction of sulfite to sulfide. This is one of several activities required for the biosynthesis of L-cysteine from sulfate. This chain is Sulfite reductase [NADPH] hemoprotein beta-component, found in Xylella fastidiosa (strain 9a5c).